A 532-amino-acid polypeptide reads, in one-letter code: MPTPFRDLHNKSNASASSYETAWSSSFSSRRSTNNDSKSNLKEIKDEPISNLDESISILENNISMMSVSSPTPAYRTPARVIAREAPMTPGDRLLQKIEKEDERDMLRQLYPEMFDSNQKPRQKPKEVKKALKVESLSDYENDDKENVPPCGKPSKEKEEKKQRTKKIVISSDSEDDGNFENYLKTLREKPTEPAKPERKIPVKKDFVVDDDYISEESSEEESEEEEEDVDDEEYRESSPEVEAKISYSDRKQKKRPTDEEEWFLLSLSEKFSGPIHEDAKVYIKETSLRYKKHRESLLTRLQDILVRRIFSAIPSEKLKVIWNARLRKSAGQCRNHSNGNSTVEMSPVVCTTAERVRDTLIHELCHAATWVVDRLHKEGHGPGWKRWGARCSSVFKSLPFIERCHSYEIEAKFFYVCEKDGCDVEIKRQSKSLDTSRKACGRCFGRFILYRYCRRTNTRIRIEDPKAKPVGPILSNSSKPSPPAPRRIVSEHPEGFKEYSEEHYWKYTAQGLKHSDVMGKLLKEFKELKQL.

Residues 1-10 (MPTPFRDLHN) are compositionally biased toward basic and acidic residues. Disordered stretches follow at residues 1–50 (MPTP…EPIS), 84–181 (REAP…GNFE), and 213–253 (YISE…DRKQ). Residues 14–32 (ASASSYETAWSSSFSSRRS) show a composition bias toward low complexity. Basic and acidic residues-rich tracts occupy residues 39–48 (SNLKEIKDEP), 94–107 (LLQKIEKEDERDML), and 124–133 (KPKEVKKALK). Over residues 213-235 (YISEESSEEESEEEEEDVDDEEY) the composition is skewed to acidic residues. A compositionally biased stretch (basic and acidic residues) spans 236–251 (RESSPEVEAKISYSDR). Residues 308 to 398 (RRIFSAIPSE…GARCSSVFKS (91 aa)) form the SprT-like domain. The interval 468-489 (AKPVGPILSNSSKPSPPAPRRI) is disordered.

Belongs to the serine-aspartate repeat-containing protein (SDr) family. As to quaternary structure, interacts with top-2; this interaction allows the resolution of topoisomerase II (top-2) DNA-protein cross-links. Mainly expressed in germ cells and early embryonic, proliferating cells.

Its subcellular location is the chromosome. Functionally, may play a role in DNA-protein cross-links (DPCs) clearance through a SUMO-dependent recruitment to sites of DPCs, ensuring the genomic stability by protecting germ cells and early embryos from various sources of damage. May resolve the topoisomerase II (top-2) DPCs. Limits replication stress and DNA double-strand breaks. The sequence is that of Germ cell nuclear acidic-1 protein from Caenorhabditis elegans.